A 543-amino-acid chain; its full sequence is Cobyric acid synthase (543 aa).

Residues 260 to 483 (MLDIVLVDLP…LHGVFDADGF (224 aa)) enclose the GATase cobBQ-type domain. Cys346 functions as the Nucleophile in the catalytic mechanism. His475 is a catalytic residue.

Belongs to the CobB/CobQ family. CobQ subfamily.

It functions in the pathway cofactor biosynthesis; adenosylcobalamin biosynthesis. In terms of biological role, catalyzes amidations at positions B, D, E, and G on adenosylcobyrinic A,C-diamide. NH(2) groups are provided by glutamine, and one molecule of ATP is hydrogenolyzed for each amidation. This is Cobyric acid synthase from Nitratidesulfovibrio vulgaris (strain ATCC 29579 / DSM 644 / CCUG 34227 / NCIMB 8303 / VKM B-1760 / Hildenborough) (Desulfovibrio vulgaris).